The primary structure comprises 145 residues: Plastocyanin, chloroplastic (145 aa).

A chloroplast-targeting transit peptide spans 1–47; sequence MKATLRAPASRASAVRPVASLKAAAQRVASVAGVSVASLALTLAAHA. The Plastocyanin-like domain maps to 48-145; the sequence is DATVKLGADS…AGMVGKIIVQ (98 aa). Cu cation contacts are provided by His-85, Cys-130, His-133, and Met-138.

Belongs to the plastocyanin family. Cu(2+) serves as cofactor.

It localises to the plastid. The protein resides in the chloroplast thylakoid membrane. In terms of biological role, participates in electron transfer between P700 and the cytochrome b6-f complex in photosystem I. This chain is Plastocyanin, chloroplastic (PETE), found in Chlamydomonas reinhardtii (Chlamydomonas smithii).